The primary structure comprises 183 residues: Non-classical export protein 2 homolog (183 aa).

The Cytoplasmic portion of the chain corresponds to 1-8; sequence MVGIRQYG. A helical transmembrane segment spans residues 9-29; it reads VFTWVFRTFQLAIDTIVLALA. Residues 30–44 lie on the Extracellular side of the membrane; that stretch reads SALVNQQTSGGSPGK. The chain crosses the membrane as a helical span at residues 45–65; sequence INFSVAVGSFAILTFFLTAVG. The Cytoplasmic portion of the chain corresponds to 66 to 75; that stretch reads RFLPTILGNP. The chain crosses the membrane as a helical span at residues 76–96; the sequence is WLIAFYDFVNWVFALTGGCCI. The Extracellular portion of the chain corresponds to 97–131; that stretch reads AVAIRVHACDNQKYLDRNHYTQGSMRRCQELKALC. The chain crosses the membrane as a helical span at residues 132–152; sequence FFLWFMFGLYVASFIVQIFIA. The Cytoplasmic portion of the chain corresponds to 153–183; the sequence is KNDTPNYTFRGRGRGKGSGPAVAPRPVMSAV. A disordered region spans residues 163-183; the sequence is GRGRGKGSGPAVAPRPVMSAV.

Belongs to the NCE102 family.

The protein localises to the cytoplasm. Its subcellular location is the golgi apparatus membrane. It localises to the cell membrane. Its function is as follows. Involved in membrane organization and might act as a sensor of sphingolipids that regulates plasma membrane function. Involved in a novel pathway of export of proteins that lack a cleavable signal sequence. The protein is Non-classical export protein 2 homolog (fhn1) of Schizosaccharomyces pombe (strain 972 / ATCC 24843) (Fission yeast).